A 289-amino-acid chain; its full sequence is Lipoyl synthase 2 (289 aa).

Residues C43, C48, C54, C69, C73, C76, and S282 each contribute to the [4Fe-4S] cluster site. In terms of domain architecture, Radical SAM core spans 55–271; sequence YAQKTATFLL…GAVARDLGFA (217 aa).

It belongs to the radical SAM superfamily. Lipoyl synthase family. [4Fe-4S] cluster is required as a cofactor.

It is found in the cytoplasm. The enzyme catalyses [[Fe-S] cluster scaffold protein carrying a second [4Fe-4S](2+) cluster] + N(6)-octanoyl-L-lysyl-[protein] + 2 oxidized [2Fe-2S]-[ferredoxin] + 2 S-adenosyl-L-methionine + 4 H(+) = [[Fe-S] cluster scaffold protein] + N(6)-[(R)-dihydrolipoyl]-L-lysyl-[protein] + 4 Fe(3+) + 2 hydrogen sulfide + 2 5'-deoxyadenosine + 2 L-methionine + 2 reduced [2Fe-2S]-[ferredoxin]. It functions in the pathway protein modification; protein lipoylation via endogenous pathway; protein N(6)-(lipoyl)lysine from octanoyl-[acyl-carrier-protein]: step 2/2. In terms of biological role, catalyzes the radical-mediated insertion of two sulfur atoms into the C-6 and C-8 positions of the octanoyl moiety bound to the lipoyl domains of lipoate-dependent enzymes, thereby converting the octanoylated domains into lipoylated derivatives. The polypeptide is Lipoyl synthase 2 (Gloeobacter violaceus (strain ATCC 29082 / PCC 7421)).